Consider the following 674-residue polypeptide: Glutaminase kidney isoform, mitochondrial (674 aa).

A mitochondrion-targeting transit peptide spans 1–54 (MMRLRGSAMLRELLLRPPAAVGGVLRRTQPLGTLCRRPRGGSRPAAGLVAAARL). The segment at 56–123 (PWWGGGGRAK…PGETDAFGNS (68 aa)) is disordered. Residues 58–71 (WGGGGRAKGPGSGG) show a composition bias toward gly residues. Residues 89 to 101 (PPQQQQQQQQQPG) are compositionally biased toward low complexity. 2 positions are modified to N6-succinyllysine: Lys135 and Lys169. Ser291 provides a ligand contact to substrate. N6-acetyllysine is present on Lys316. Residues 320–327 (GLRFNKLF) are highly mobile activation loop. Residues Asn340, Glu386, Asn393, Tyr419, Tyr471, and Val489 each contribute to the substrate site. 2 ANK repeats span residues 590 to 619 (DSRTALHVAAAEGHVEVVKFLLEACKVNPF) and 624 to 653 (WNNTPMDEALHFGHHDVFKILQEYQVQYTP). Positions 652–674 (TPQGDSDDGKENQTVHKNLDGLL) are disordered. Residue Ser657 is modified to Phosphoserine. Over residues 658–674 (DDGKENQTVHKNLDGLL) the composition is skewed to basic and acidic residues.

Belongs to the glutaminase family. As to quaternary structure, homotetramer, dimer of dimers. Tetramer composed of 68 and 65 kDa peptides in a 1:3 ratio. Can assemble into higher oligomers (in vitro), but the physiological significance of this is not clear. Interacts with RAF1 and MAP2K2. Interacts with ATCAY; the interaction is direct and may control GLS localization, negatively regulating its activity. Synthesized as a 74-kDa cytosolic precursor which is proteolytically processed by the mitochondrial-processing peptidase (MPP) via a 72-kDa intermediate to yield the mature mitochondrial 68- and 65-kDa subunits. Kidney, brain, and intestine.

It localises to the mitochondrion. The protein resides in the cytoplasm. It is found in the cytosol. The protein localises to the mitochondrion matrix. The enzyme catalyses L-glutamine + H2O = L-glutamate + NH4(+). Its activity is regulated as follows. Enzyme activity is increased by phosphate, due to increased kcat and increased substrate affinity. Its function is as follows. Catalyzes the first reaction in the primary pathway for the renal catabolism of glutamine. Plays a role in maintaining acid-base homeostasis. Regulates the levels of the neurotransmitter glutamate, the main excitatory neurotransmitter in the brain. This chain is Glutaminase kidney isoform, mitochondrial (Gls), found in Rattus norvegicus (Rat).